A 287-amino-acid chain; its full sequence is Probable glucose uptake protein GlcU (287 aa).

The next 9 helical transmembrane spans lie at L7–G29, I34–F56, N58–G75, W114–L136, M156–V178, A183–H202, T209–Y228, V233–F255, and T267–L286.

This sequence belongs to the GRP transporter (TC 2.A.7.5) family.

The protein localises to the cell membrane. Functionally, involved in the uptake of glucose. The sequence is that of Probable glucose uptake protein GlcU (glcU) from Staphylococcus aureus (strain COL).